Consider the following 485-residue polypeptide: ATP synthase subunit beta (485 aa).

ATP is bound at residue 170–177 (GGAGVGKT).

Belongs to the ATPase alpha/beta chains family. As to quaternary structure, F-type ATPases have 2 components, CF(1) - the catalytic core - and CF(0) - the membrane proton channel. CF(1) has five subunits: alpha(3), beta(3), gamma(1), delta(1), epsilon(1). CF(0) has three main subunits: a(1), b(2) and c(9-12). The alpha and beta chains form an alternating ring which encloses part of the gamma chain. CF(1) is attached to CF(0) by a central stalk formed by the gamma and epsilon chains, while a peripheral stalk is formed by the delta and b chains.

It is found in the cell membrane. It carries out the reaction ATP + H2O + 4 H(+)(in) = ADP + phosphate + 5 H(+)(out). Produces ATP from ADP in the presence of a proton gradient across the membrane. The catalytic sites are hosted primarily by the beta subunits. The chain is ATP synthase subunit beta from Salinispora arenicola (strain CNS-205).